Consider the following 1167-residue polypeptide: Non-toxic nonhemagglutinin (1167 aa).

The interval 1-381 is light chain nLC; sequence MDIIDNVDIT…PQQIINLIDN (381 aa). The tract at residues 382-804 is N-heavy chain nHN; that stretch reads NNILLIKSYI…LFNSKIQLTI (423 aa). The segment at 805–1167 is C-heavy chain nHC; it reads KNEKPEYNLL…LNDIYSWTLI (363 aa).

This sequence belongs to the botulism non-toxic nonhemagglutinin family.

Expression of the ptox operon (ntnh-orfX1-orfX2-orfX3-pmp1) in B.thuringiensis kills Anopheles but not Aedes mosquito 3rd instar larvae. The ntnh-pmp1 construct is about half as toxic. The polypeptide is Non-toxic nonhemagglutinin (Paraclostridium bifermentans (Clostridium bifermentans)).